The chain runs to 116 residues: Phosphoribosyl-AMP cyclohydrolase (116 aa).

Residue Asp80 coordinates Mg(2+). Residue Cys81 participates in Zn(2+) binding. The Mg(2+) site is built by Asp82 and Asp84. Positions 98 and 105 each coordinate Zn(2+).

Belongs to the PRA-CH family. In terms of assembly, homodimer. Mg(2+) serves as cofactor. Requires Zn(2+) as cofactor.

It localises to the cytoplasm. The enzyme catalyses 1-(5-phospho-beta-D-ribosyl)-5'-AMP + H2O = 1-(5-phospho-beta-D-ribosyl)-5-[(5-phospho-beta-D-ribosylamino)methylideneamino]imidazole-4-carboxamide. The protein operates within amino-acid biosynthesis; L-histidine biosynthesis; L-histidine from 5-phospho-alpha-D-ribose 1-diphosphate: step 3/9. In terms of biological role, catalyzes the hydrolysis of the adenine ring of phosphoribosyl-AMP. The chain is Phosphoribosyl-AMP cyclohydrolase from Trichormus variabilis (strain ATCC 29413 / PCC 7937) (Anabaena variabilis).